Here is a 92-residue protein sequence, read N- to C-terminus: MTRLLKKGPFVAYHLLEKIEDLNIKREKKIIVTWSRASTIVPTMIGHTIAVYNGQEHLPIYITDRMVGHKLGEFALTRVFKGHAKSDKKSRR.

It belongs to the universal ribosomal protein uS19 family.

It is found in the plastid. The protein localises to the chloroplast. Functionally, protein S19 forms a complex with S13 that binds strongly to the 16S ribosomal RNA. The polypeptide is Small ribosomal subunit protein uS19c (rps19) (Anthoceros angustus (Hornwort)).